Consider the following 104-residue polypeptide: U20-lycotoxin-Ls1d (104 aa).

The first 30 residues, 1 to 30 (MFSTSDQVSKMNSRILSALLILGIATCVIA), serve as a signal peptide directing secretion. In terms of domain architecture, WAP spans 31–76 (GGFCPKSRHPQCNLSYKINDCCAQSDCRVGSVCCVEGCGNVCRAES). 5 cysteine pairs are disulfide-bonded: cysteine 34/cysteine 64, cysteine 42/cysteine 68, cysteine 51/cysteine 63, cysteine 52/cysteine 90, and cysteine 57/cysteine 72.

Belongs to the venom protein 11 family. 02 (wap-2) subfamily. Post-translationally, contains 5 disulfide bonds. In terms of tissue distribution, expressed by the venom gland.

Its subcellular location is the secreted. Functionally, has antibacterial activity. The chain is U20-lycotoxin-Ls1d from Lycosa singoriensis (Wolf spider).